A 79-amino-acid polypeptide reads, in one-letter code: Acyl carrier protein (79 aa).

In terms of domain architecture, Carrier spans 2-77; it reads SDIAERVKKI…DAVKFLEKNS (76 aa). The residue at position 37 (Ser37) is an O-(pantetheine 4'-phosphoryl)serine.

It belongs to the acyl carrier protein (ACP) family. Post-translationally, 4'-phosphopantetheine is transferred from CoA to a specific serine of apo-ACP by AcpS. This modification is essential for activity because fatty acids are bound in thioester linkage to the sulfhydryl of the prosthetic group.

Its subcellular location is the cytoplasm. It participates in lipid metabolism; fatty acid biosynthesis. Its function is as follows. Carrier of the growing fatty acid chain in fatty acid biosynthesis. The chain is Acyl carrier protein from Methylobacterium radiotolerans (strain ATCC 27329 / DSM 1819 / JCM 2831 / NBRC 15690 / NCIMB 10815 / 0-1).